Consider the following 94-residue polypeptide: Small ribosomal subunit protein bS18 (94 aa).

The protein belongs to the bacterial ribosomal protein bS18 family. In terms of assembly, part of the 30S ribosomal subunit. Forms a tight heterodimer with protein bS6.

In terms of biological role, binds as a heterodimer with protein bS6 to the central domain of the 16S rRNA, where it helps stabilize the platform of the 30S subunit. This Leptothrix cholodnii (strain ATCC 51168 / LMG 8142 / SP-6) (Leptothrix discophora (strain SP-6)) protein is Small ribosomal subunit protein bS18.